A 153-amino-acid polypeptide reads, in one-letter code: Large ribosomal subunit protein uL15 (153 aa).

Residues 1-42 (MKLNTIKPGIGSAKPKRRVGRGIGSGLGKTCGRGHKGQKSRA) are disordered. Over residues 21-31 (RGIGSGLGKTC) the composition is skewed to gly residues.

The protein belongs to the universal ribosomal protein uL15 family. As to quaternary structure, part of the 50S ribosomal subunit.

Functionally, binds to the 23S rRNA. The chain is Large ribosomal subunit protein uL15 from Nitrosomonas europaea (strain ATCC 19718 / CIP 103999 / KCTC 2705 / NBRC 14298).